The sequence spans 224 residues: ATP-dependent dethiobiotin synthetase BioD (224 aa).

Threonine 18 serves as a coordination point for Mg(2+). Lysine 39 is an active-site residue. Residue serine 43 participates in substrate binding. Residues aspartate 56 and glutamate 117 each contribute to the Mg(2+) site. ATP is bound by residues aspartate 56, 117-120 (EGVG), and 177-178 (NE).

It belongs to the dethiobiotin synthetase family. As to quaternary structure, homodimer. Requires Mg(2+) as cofactor.

The protein localises to the cytoplasm. It carries out the reaction (7R,8S)-7,8-diammoniononanoate + CO2 + ATP = (4R,5S)-dethiobiotin + ADP + phosphate + 3 H(+). The protein operates within cofactor biosynthesis; biotin biosynthesis; biotin from 7,8-diaminononanoate: step 1/2. Functionally, catalyzes a mechanistically unusual reaction, the ATP-dependent insertion of CO2 between the N7 and N8 nitrogen atoms of 7,8-diaminopelargonic acid (DAPA, also called 7,8-diammoniononanoate) to form a ureido ring. The protein is ATP-dependent dethiobiotin synthetase BioD of Xanthomonas oryzae pv. oryzae (strain MAFF 311018).